The chain runs to 628 residues: Chaperone protein DnaK (628 aa).

Threonine 195 bears the Phosphothreonine; by autocatalysis mark. The disordered stretch occupies residues 545–628 (QLEENEGAAQ…VIDADFKAAE (84 aa)). Residues 555 to 591 (DAKDALKAAADEAEEAVRSEDDARIESAQKRLEEELR) show a composition bias toward basic and acidic residues. Low complexity predominate over residues 596 to 612 (AQQAAGQGQPQGAQAQG). Basic and acidic residues predominate over residues 614–628 (KADDDVIDADFKAAE).

Belongs to the heat shock protein 70 family.

Its function is as follows. Acts as a chaperone. The chain is Chaperone protein DnaK from Deinococcus deserti (strain DSM 17065 / CIP 109153 / LMG 22923 / VCD115).